The primary structure comprises 264 residues: S-adenosylmethionine decarboxylase proenzyme (264 aa).

Ser112 serves as the catalytic Schiff-base intermediate with substrate; via pyruvic acid. Pyruvic acid (Ser); by autocatalysis is present on Ser112. The Proton acceptor; for processing activity role is filled by His117. The Proton donor; for catalytic activity role is filled by Cys140.

It belongs to the prokaryotic AdoMetDC family. Type 2 subfamily. In terms of assembly, heterooctamer of four alpha and four beta chains arranged as a tetramer of alpha/beta heterodimers. The cofactor is pyruvate. In terms of processing, is synthesized initially as an inactive proenzyme. Formation of the active enzyme involves a self-maturation process in which the active site pyruvoyl group is generated from an internal serine residue via an autocatalytic post-translational modification. Two non-identical subunits are generated from the proenzyme in this reaction, and the pyruvate is formed at the N-terminus of the alpha chain, which is derived from the carboxyl end of the proenzyme. The post-translation cleavage follows an unusual pathway, termed non-hydrolytic serinolysis, in which the side chain hydroxyl group of the serine supplies its oxygen atom to form the C-terminus of the beta chain, while the remainder of the serine residue undergoes an oxidative deamination to produce ammonia and the pyruvoyl group blocking the N-terminus of the alpha chain.

The catalysed reaction is S-adenosyl-L-methionine + H(+) = S-adenosyl 3-(methylsulfanyl)propylamine + CO2. It functions in the pathway amine and polyamine biosynthesis; S-adenosylmethioninamine biosynthesis; S-adenosylmethioninamine from S-adenosyl-L-methionine: step 1/1. Functionally, catalyzes the decarboxylation of S-adenosylmethionine to S-adenosylmethioninamine (dcAdoMet), the propylamine donor required for the synthesis of the polyamines spermine and spermidine from the diamine putrescine. This Citrobacter koseri (strain ATCC BAA-895 / CDC 4225-83 / SGSC4696) protein is S-adenosylmethionine decarboxylase proenzyme.